The sequence spans 101 residues: Protein Tat (101 aa).

The span at 1-12 (MDPVDPRLEPWK) shows a compositional bias: basic and acidic residues. Residues 1-20 (MDPVDPRLEPWKHPGSQPKA) are disordered. An interaction with human CREBBP region spans residues 1–24 (MDPVDPRLEPWKHPGSQPKAACTS). The interval 1 to 48 (MDPVDPRLEPWKHPGSQPKAACTSCYCKKCCFHCQVCFTTKGLGISYG) is transactivation. Residues Cys-22, Cys-25, and Cys-27 each contribute to the Zn(2+) site. Residues 22–37 (CTSCYCKKCCFHCQVC) form a cysteine-rich region. Lys-28 bears the N6-acetyllysine; by host PCAF mark. 4 residues coordinate Zn(2+): Cys-30, His-33, Cys-34, and Cys-37. A core region spans residues 38 to 48 (FTTKGLGISYG). Basic residues predominate over residues 48 to 57 (GRKKRRQRRR). The disordered stretch occupies residues 48–101 (GRKKRRQRRRAPQDSQTHQVSLPKQPASQARGDPTGPKESKKKVERETETDPVD). The Nuclear localization signal, RNA-binding (TAR), and protein transduction signature appears at 49–57 (RKKRRQRRR). The interaction with the host capping enzyme RNGTT stretch occupies residues 49–86 (RKKRRQRRRAPQDSQTHQVSLPKQPASQARGDPTGPKE). Lys-50 and Lys-51 each carry N6-acetyllysine; by host EP300 and GCN5L2. Asymmetric dimethylarginine; by host PRMT6 is present on residues Arg-52 and Arg-53. The span at 60-75 (QDSQTHQVSLPKQPAS) shows a compositional bias: polar residues. Lys-71 participates in a covalent cross-link: Glycyl lysine isopeptide (Lys-Gly) (interchain with G-Cter in ubiquitin). Positions 78 to 80 (RGD) match the Cell attachment site motif. The segment covering 83–101 (GPKESKKKVERETETDPVD) has biased composition (basic and acidic residues).

The protein belongs to the lentiviruses Tat family. Interacts with host CCNT1. Associates with the P-TEFb complex composed at least of Tat, P-TEFb (CDK9 and CCNT1), TAR RNA, RNA Pol II. Recruits the HATs CREBBP, TAF1/TFIID, EP300, PCAF and GCN5L2. Interacts with host KAT5/Tip60; this interaction targets the latter to degradation. Interacts with the host deacetylase SIRT1. Interacts with host capping enzyme RNGTT; this interaction stimulates RNGTT. Binds to host KDR, and to the host integrins ITGAV/ITGB3 and ITGA5/ITGB1. Interacts with host KPNB1/importin beta-1 without previous binding to KPNA1/importin alpha-1. Interacts with EIF2AK2. Interacts with host nucleosome assembly protein NAP1L1; this interaction may be required for the transport of Tat within the nucleus, since the two proteins interact at the nuclear rim. Interacts with host C1QBP/SF2P32; this interaction involves lysine-acetylated Tat. Interacts with the host chemokine receptors CCR2, CCR3 and CXCR4. Interacts with host DPP4/CD26; this interaction may trigger an anti-proliferative effect. Interacts with host LDLR. Interacts with the host extracellular matrix metalloproteinase MMP1. Interacts with host PRMT6; this interaction mediates Tat's methylation. Interacts with, and is ubiquitinated by MDM2/Hdm2. Interacts with host PSMC3 and HTATIP2. Interacts with STAB1; this interaction may overcome SATB1-mediated repression of IL2 and IL2RA (interleukin) in T cells by binding to the same domain than HDAC1. Interacts (when acetylated) with human CDK13, thereby increasing HIV-1 mRNA splicing and promoting the production of the doubly spliced HIV-1 protein Nef. Interacts with host TBP; this interaction modulates the activity of transcriptional pre-initiation complex. Interacts with host RELA. Interacts with host PLSCR1; this interaction negatively regulates Tat transactivation activity by altering its subcellular distribution. Asymmetrical arginine methylation by host PRMT6 seems to diminish the transactivation capacity of Tat and affects the interaction with host CCNT1. In terms of processing, acetylation by EP300, CREBBP, GCN5L2/GCN5 and PCAF regulates the transactivation activity of Tat. EP300-mediated acetylation of Lys-50 promotes dissociation of Tat from the TAR RNA through the competitive binding to PCAF's bromodomain. In addition, the non-acetylated Tat's N-terminus can also interact with PCAF. PCAF-mediated acetylation of Lys-28 enhances Tat's binding to CCNT1. Lys-50 is deacetylated by SIRT1. Post-translationally, polyubiquitination by host MDM2 does not target Tat to degradation, but activates its transactivation function and fosters interaction with CCNT1 and TAR RNA. Phosphorylated by EIF2AK2 on serine and threonine residues adjacent to the basic region important for TAR RNA binding and function. Phosphorylation of Tat by EIF2AK2 is dependent on the prior activation of EIF2AK2 by dsRNA.

It is found in the host nucleus. The protein localises to the host nucleolus. It localises to the host cytoplasm. Its subcellular location is the secreted. Transcriptional activator that increases RNA Pol II processivity, thereby increasing the level of full-length viral transcripts. Recognizes a hairpin structure at the 5'-LTR of the nascent viral mRNAs referred to as the transactivation responsive RNA element (TAR) and recruits the cyclin T1-CDK9 complex (P-TEFb complex) that will in turn hyperphosphorylate the RNA polymerase II to allow efficient elongation. The CDK9 component of P-TEFb and other Tat-activated kinases hyperphosphorylate the C-terminus of RNA Pol II that becomes stabilized and much more processive. Other factors such as HTATSF1/Tat-SF1, SUPT5H/SPT5, and HTATIP2 are also important for Tat's function. Besides its effect on RNA Pol II processivity, Tat induces chromatin remodeling of proviral genes by recruiting the histone acetyltransferases (HATs) CREBBP, EP300 and PCAF to the chromatin. This also contributes to the increase in proviral transcription rate, especially when the provirus integrates in transcriptionally silent region of the host genome. To ensure maximal activation of the LTR, Tat mediates nuclear translocation of NF-kappa-B by interacting with host RELA. Through its interaction with host TBP, Tat may also modulate transcription initiation. Tat can reactivate a latently infected cell by penetrating in it and transactivating its LTR promoter. In the cytoplasm, Tat is thought to act as a translational activator of HIV-1 mRNAs. Functionally, extracellular circulating Tat can be endocytosed by surrounding uninfected cells via the binding to several surface receptors such as CD26, CXCR4, heparan sulfate proteoglycans (HSPG) or LDLR. Neurons are rarely infected, but they internalize Tat via their LDLR. Through its interaction with nuclear HATs, Tat is potentially able to control the acetylation-dependent cellular gene expression. Modulates the expression of many cellular genes involved in cell survival, proliferation or in coding for cytokines or cytokine receptors. Tat plays a role in T-cell and neurons apoptosis. Tat induced neurotoxicity and apoptosis probably contribute to neuroAIDS. Circulating Tat also acts as a chemokine-like and/or growth factor-like molecule that binds to specific receptors on the surface of the cells, affecting many cellular pathways. In the vascular system, Tat binds to ITGAV/ITGB3 and ITGA5/ITGB1 integrins dimers at the surface of endothelial cells and competes with bFGF for heparin-binding sites, leading to an excess of soluble bFGF. The protein is Protein Tat of Homo sapiens (Human).